The sequence spans 525 residues: uncharacterized protein (525 aa).

2 helical membrane-spanning segments follow: residues 28–48 and 353–373; these read FIDVHVANISVAAFLTPNLII and GVNALLAAIGAEIGANILFTP. A Pterin-binding domain is found at 146–394; that stretch reads DIKIGKLKVG…ELKIASKMMF (249 aa).

The protein localises to the cell membrane. Unknown. Does not possess dihydropteroate synthase (DHPS) activity since it does not catalyze the condensation of 6-hydroxymethyl-7,8-dihydropterin pyrophosphate (DHPP) and 4-aminobenzoate to form 7,8-dihydropteroate. This is an uncharacterized protein from Methanocaldococcus jannaschii (strain ATCC 43067 / DSM 2661 / JAL-1 / JCM 10045 / NBRC 100440) (Methanococcus jannaschii).